Consider the following 90-residue polypeptide: MVKNSFISAISQEEKEKNKGSTEFQILNFTKRIRRLTSHLELHKKDYLSQRGLRKILGKRQRLLTYLSNKNRVRYKELIGQLDIREPKTR.

It belongs to the universal ribosomal protein uS15 family. Part of the 30S ribosomal subunit.

It is found in the plastid. It localises to the chloroplast. The protein is Small ribosomal subunit protein uS15c (rps15) of Piper cenocladum (Ant piper).